A 498-amino-acid chain; its full sequence is Zinc finger protein 497 (498 aa).

Residues 30–104 (SEGAVSGGWG…LRPSPLPEEP (75 aa)) form a disordered region. 14 consecutive C2H2-type zinc fingers follow at residues 106–128 (CRCGECGKAFSQGSYLLQHRRVH), 134–156 (YTCPECGKAFAWSSNLSQHQRIH), 162–184 (YACRECGKAFRAHSQLIHHQETH), 190–212 (FRCPDCGKSFGRSTTLVQHRRTH), 218–240 (YECPECGKAFSWNSNFLEHRRVH), 246–268 (HACRDCGKAFSQSSNLAEHLKIH), 274–296 (HACPDCGKAFVRVAGLRQHRRTH), 302–324 (FPCAECGKAFRESSQLLQHQRTH), 330–352 (FECAECGQAFVMGSYLAEHRRVH), 358–380 (HACAQCGKAFSQRSNLLSHRRTH), 386–408 (FACADCGKAFRGSSGLAHHRLSH), 414–436 (FACAECGKAFRGSSELRQHQRLH), 442–464 (FVCAHCSKAFVRKSELLSHRRTH), and 470–492 (YACGECGKPFSHRCNLNEHQKRH).

This sequence belongs to the krueppel C2H2-type zinc-finger protein family.

It is found in the nucleus. May be involved in transcriptional regulation. This chain is Zinc finger protein 497 (ZNF497), found in Homo sapiens (Human).